We begin with the raw amino-acid sequence, 96 residues long: Probable spanin, outer lipoprotein subunit (96 aa).

The N-terminal stretch at 1–24 (MRTKIFAAGTVLTCLMLCAGCTSA) is a signal peptide. At 25–96 (PPAPTPVIVP…QTRQPAQGAD (72 aa)) the chain is on the periplasmic side. A coiled-coil region spans residues 54–78 (GDLSADIRQLENALARCASQVKMIK).

As to quaternary structure, interacts (via C-terminus) with the spanin inner membrane subunit (via C-terminus). Part of the spanin complex which spans the entire periplasmic space. The spanin complex is composed of spanin inner membrane subunit and spanin outer membrane subunit.

It is found in the host cell outer membrane. Component of the spanin complex that disrupts the host outer membrane and participates in cell lysis during virus exit. The spanin complex conducts the final step in host lysis by disrupting the outer membrane after holin and endolysin action have permeabilized the inner membrane and degraded the host peptidoglycans. Host outer membrane disruption is possibly due to local fusion between the inner and outer membrane performed by the spanin complex. The polypeptide is Probable spanin, outer lipoprotein subunit (lysC) (Enterobacteriaceae (Bacteriophage P2)).